The primary structure comprises 205 residues: Small ribosomal subunit protein uS4 (205 aa).

The tract at residues 18-46 (NIWGRPKSPVNRREYGPGQHGQRRKGKLS) is disordered. In terms of domain architecture, S4 RNA-binding spans 94–157 (RRLDTVVYRA…KQLTFVLEAN (64 aa)).

This sequence belongs to the universal ribosomal protein uS4 family. Part of the 30S ribosomal subunit. Contacts protein S5. The interaction surface between S4 and S5 is involved in control of translational fidelity.

Functionally, one of the primary rRNA binding proteins, it binds directly to 16S rRNA where it nucleates assembly of the body of the 30S subunit. Its function is as follows. With S5 and S12 plays an important role in translational accuracy. This chain is Small ribosomal subunit protein uS4, found in Rhodopseudomonas palustris (strain BisB18).